The primary structure comprises 362 residues: Chorismate synthase (362 aa).

Residues Arg48 and Arg54 each coordinate NADP(+). Residues Arg131–Ser133, Asn243–Ala244, Gly287, Lys302–Ser306, and Arg328 contribute to the FMN site.

The protein belongs to the chorismate synthase family. In terms of assembly, homotetramer. FMNH2 is required as a cofactor.

The enzyme catalyses 5-O-(1-carboxyvinyl)-3-phosphoshikimate = chorismate + phosphate. The protein operates within metabolic intermediate biosynthesis; chorismate biosynthesis; chorismate from D-erythrose 4-phosphate and phosphoenolpyruvate: step 7/7. Catalyzes the anti-1,4-elimination of the C-3 phosphate and the C-6 proR hydrogen from 5-enolpyruvylshikimate-3-phosphate (EPSP) to yield chorismate, which is the branch point compound that serves as the starting substrate for the three terminal pathways of aromatic amino acid biosynthesis. This reaction introduces a second double bond into the aromatic ring system. The protein is Chorismate synthase of Rhodopseudomonas palustris (strain ATCC BAA-98 / CGA009).